The primary structure comprises 51 residues: Ribosome biogenesis protein Nop10 (51 aa).

Belongs to the NOP10 family.

Functionally, involved in ribosome biogenesis; more specifically in 18S rRNA pseudouridylation and in cleavage of pre-rRNA. This chain is Ribosome biogenesis protein Nop10, found in Methanosarcina barkeri (strain Fusaro / DSM 804).